The following is a 158-amino-acid chain: Cyclic pyranopterin monophosphate synthase (158 aa).

Substrate-binding positions include 75-77 and 111-112; these read LCH and ME. Asp126 is an active-site residue.

This sequence belongs to the MoaC family. As to quaternary structure, homohexamer; trimer of dimers.

The catalysed reaction is (8S)-3',8-cyclo-7,8-dihydroguanosine 5'-triphosphate = cyclic pyranopterin phosphate + diphosphate. It functions in the pathway cofactor biosynthesis; molybdopterin biosynthesis. Catalyzes the conversion of (8S)-3',8-cyclo-7,8-dihydroguanosine 5'-triphosphate to cyclic pyranopterin monophosphate (cPMP). This chain is Cyclic pyranopterin monophosphate synthase, found in Caulobacter vibrioides (strain ATCC 19089 / CIP 103742 / CB 15) (Caulobacter crescentus).